The primary structure comprises 414 residues: Stork-head box protein ham-1 (414 aa).

The interval 1–31 (MTYLAVVLNGPKAKNGRKVFDSFLEQNRQMF) is essential for association with cell cortex. Positions 93-170 (QQVEQMHFVP…MADHYFVSVP (78 aa)) constitute a Winged helix Storkhead-box1 domain. The disordered stretch occupies residues 282 to 362 (ECQRKARRRN…SNEEAGSISD (81 aa)). The interval 285–295 (RKARRRNHPRR) is bi-partite nuclear localization signal. The nuclear localization signal stretch occupies residues 321–327 (PTRRRAR). Positions 332-351 (LRSSTPNNSDSAYSISPPHT) are enriched in polar residues.

It is found in the cytoplasm. The protein resides in the cell cortex. It localises to the nucleus. Probable transcription factor. Required for asymmetric cell division in neuroblasts, perhaps acting by regulating spindle positioning and myosin polarization, and thus the position of the cleavage plane. Required to produce daughter cell size asymmetry in neuroblasts undergoing asymmetric cell division, usually giving rise to one precursor cell and one apoptotic cell. Positively modulates expression of the serine/threonine kinase pig-1/MELK during asymmetric division of the Q.a neuroblast. Plays a role in neural fate specification in several dopaminergic lineages, including the hermaphrodite-specific neuron (HSN)/phasmid neuron (PHB), acting in concert with the kinase, ham-1, and the T-box protein tbx-2 and the homeobox protein egl-5. In Caenorhabditis elegans, this protein is Stork-head box protein ham-1.